A 184-amino-acid polypeptide reads, in one-letter code: Photosystem I assembly protein Ycf4 (184 aa).

Helical transmembrane passes span 22-42 and 57-77; these read FCWACILFLGSLGFLVVGTSS and ILFFPQGIVMSFYGIAGLFIS.

This sequence belongs to the Ycf4 family.

The protein localises to the plastid. Its subcellular location is the chloroplast thylakoid membrane. Its function is as follows. Seems to be required for the assembly of the photosystem I complex. This chain is Photosystem I assembly protein Ycf4, found in Phalaenopsis aphrodite subsp. formosana (Moth orchid).